Here is a 226-residue protein sequence, read N- to C-terminus: Probable endolytic peptidoglycan transglycosylase RlpA (226 aa).

A signal peptide spans M1–S26. Residue C27 is the site of N-palmitoyl cysteine attachment. C27 carries S-diacylglycerol cysteine lipidation.

The protein belongs to the RlpA family.

The protein localises to the cell membrane. Functionally, lytic transglycosylase with a strong preference for naked glycan strands that lack stem peptides. In Aquifex aeolicus (strain VF5), this protein is Probable endolytic peptidoglycan transglycosylase RlpA.